We begin with the raw amino-acid sequence, 330 residues long: 4-hydroxythreonine-4-phosphate dehydrogenase (330 aa).

Substrate is bound by residues H134 and T135. The a divalent metal cation site is built by H164, H209, and H264. Substrate-binding residues include K272, N281, and R290.

It belongs to the PdxA family. Homodimer. Zn(2+) serves as cofactor. Requires Mg(2+) as cofactor. It depends on Co(2+) as a cofactor.

The protein resides in the cytoplasm. It catalyses the reaction 4-(phosphooxy)-L-threonine + NAD(+) = 3-amino-2-oxopropyl phosphate + CO2 + NADH. Its pathway is cofactor biosynthesis; pyridoxine 5'-phosphate biosynthesis; pyridoxine 5'-phosphate from D-erythrose 4-phosphate: step 4/5. Catalyzes the NAD(P)-dependent oxidation of 4-(phosphooxy)-L-threonine (HTP) into 2-amino-3-oxo-4-(phosphooxy)butyric acid which spontaneously decarboxylates to form 3-amino-2-oxopropyl phosphate (AHAP). The protein is 4-hydroxythreonine-4-phosphate dehydrogenase of Pseudoalteromonas translucida (strain TAC 125).